The chain runs to 594 residues: Protein HOTHEAD (594 aa).

An N-terminal signal peptide occupies residues 1 to 19; sequence MALKLFLFALLLCLPTSLS. 64–91 contributes to the FAD binding site; sequence DYIVIGGGTAGCPLAATLSQNFSVLVLE. The active-site Proton acceptor is the histidine 529.

The protein belongs to the GMC oxidoreductase family. FAD serves as cofactor. As to expression, expressed in roots, leaves, stems, inflorescences and siliques. Found not only in epidermis but also in all sub-epidermal cell layers.

Functionally, probable FAD-dependent enzyme. Involved in regulating post-genital organ fusion. Required to limit cellular interactions between contacting epidermal cells during floral development. The protein is Protein HOTHEAD (HTH) of Arabidopsis thaliana (Mouse-ear cress).